The following is a 298-amino-acid chain: Inosose dehydratase (298 aa).

It belongs to the IolE/MocC family. Glutathione serves as cofactor. It depends on Co(2+) as a cofactor. The cofactor is Mn(2+).

It catalyses the reaction scyllo-inosose = 3D-3,5/4-trihydroxycyclohexane-1,2-dione + H2O. The protein operates within polyol metabolism; myo-inositol degradation into acetyl-CoA; acetyl-CoA from myo-inositol: step 2/7. Catalyzes the dehydration of inosose (2-keto-myo-inositol, 2KMI or 2,4,6/3,5-pentahydroxycyclohexanone) to 3D-(3,5/4)-trihydroxycyclohexane-1,2-dione (D-2,3-diketo-4-deoxy-epi-inositol). This is Inosose dehydratase from Clostridium beijerinckii (strain ATCC 51743 / NCIMB 8052) (Clostridium acetobutylicum).